The primary structure comprises 182 residues: NADH-quinone oxidoreductase subunit I (182 aa).

4Fe-4S ferredoxin-type domains are found at residues 52-82 (LTRD…LQKA) and 92-121 (DFFR…LTPD). [4Fe-4S] cluster is bound by residues Cys62, Cys65, Cys68, Cys72, Cys101, Cys104, Cys107, and Cys111.

This sequence belongs to the complex I 23 kDa subunit family. As to quaternary structure, NDH-1 is composed of 13 different subunits. Subunits NuoA, H, J, K, L, M, N constitute the membrane sector of the complex. Requires [4Fe-4S] cluster as cofactor.

It localises to the cell inner membrane. It carries out the reaction a quinone + NADH + 5 H(+)(in) = a quinol + NAD(+) + 4 H(+)(out). Its function is as follows. NDH-1 shuttles electrons from NADH, via FMN and iron-sulfur (Fe-S) centers, to quinones in the respiratory chain. The immediate electron acceptor for the enzyme in this species is believed to be ubiquinone. Couples the redox reaction to proton translocation (for every two electrons transferred, four hydrogen ions are translocated across the cytoplasmic membrane), and thus conserves the redox energy in a proton gradient. The sequence is that of NADH-quinone oxidoreductase subunit I from Pseudomonas syringae pv. syringae (strain B728a).